A 245-amino-acid chain; its full sequence is Bis(5'-nucleosyl)-tetraphosphatase PrpE [asymmetrical] (245 aa).

It belongs to the PrpE family. Requires Ni(2+) as cofactor.

It catalyses the reaction P(1),P(4)-bis(5'-guanosyl) tetraphosphate + H2O = GMP + GTP + 2 H(+). Asymmetrically hydrolyzes Ap4p to yield AMP and ATP. This is Bis(5'-nucleosyl)-tetraphosphatase PrpE [asymmetrical] from Geobacillus thermodenitrificans (strain NG80-2).